The following is a 559-amino-acid chain: Hepatocyte nuclear factor 1-beta (559 aa).

Residues 1-31 (MVSKLTSLQQELLSALLSSGVTKEVLVQALE) are dimerization. The HNF-p1 domain occupies 1–32 (MVSKLTSLQQELLSALLSSGVTKEVLVQALEE). Phosphoserine occurs at positions 49, 52, 75, and 80. The region spanning 93–188 (KELQALNTEE…ILRQFNQTVQ (96 aa)) is the POU-specific atypical domain. The homeobox; HNF1-type DNA-binding region spans 231–312 (MRRNRFKWGP…RRKEEEAFRQ (82 aa)). Over residues 328–341 (NTLLSHSSPHHQPS) the composition is skewed to low complexity. The interval 328–371 (NTLLSHSSPHHQPSTSPPNKLPGVRYNQQGNNEVTSSSTISHHG) is disordered. Over residues 353–371 (YNQQGNNEVTSSSTISHHG) the composition is skewed to polar residues.

Belongs to the HNF1 homeobox family. Binds DNA as a dimer. Can form homodimer or heterodimer with HNF1-alpha. Interacts (via HNF-p1 domain) with PCBD1; the interaction increases its transactivation activity.

It is found in the nucleus. In terms of biological role, transcription factor that binds to the inverted palindrome 5'-GTTAATNATTAAC-3'. Binds to the FPC element in the cAMP regulatory unit of the PLAU gene. Transcriptional activity is increased by coactivator PCBD1. The sequence is that of Hepatocyte nuclear factor 1-beta (HNF1B) from Sus scrofa (Pig).